Here is a 324-residue protein sequence, read N- to C-terminus: Glyoxylate/hydroxypyruvate reductase B (324 aa).

Residues Arg-237 and Glu-266 contribute to the active site. Catalysis depends on His-285, which acts as the Proton donor.

It belongs to the D-isomer specific 2-hydroxyacid dehydrogenase family. GhrB subfamily. In terms of assembly, homodimer.

The protein resides in the cytoplasm. The catalysed reaction is glycolate + NADP(+) = glyoxylate + NADPH + H(+). It catalyses the reaction (R)-glycerate + NAD(+) = 3-hydroxypyruvate + NADH + H(+). The enzyme catalyses (R)-glycerate + NADP(+) = 3-hydroxypyruvate + NADPH + H(+). Functionally, catalyzes the NADPH-dependent reduction of glyoxylate and hydroxypyruvate into glycolate and glycerate, respectively. This is Glyoxylate/hydroxypyruvate reductase B from Shigella flexneri serotype 5b (strain 8401).